Consider the following 325-residue polypeptide: Small ribosomal subunit protein uS4m (325 aa).

The region spanning Lys-146–Lys-209 is the S4 RNA-binding domain.

The protein belongs to the universal ribosomal protein uS4 family.

Its subcellular location is the mitochondrion. This Dictyostelium citrinum (Slime mold) protein is Small ribosomal subunit protein uS4m (mrps4).